The sequence spans 468 residues: GTPase Der (468 aa).

2 consecutive EngA-type G domains span residues 3–167 (PTLV…PYAE) and 179–352 (PVIA…TAAM). Residues 9-16 (GRPNVGKS), 56-60 (DTGGF), 119-122 (NKAE), 185-192 (GRPNVGKS), 232-236 (DTAGL), and 297-300 (NKWD) each bind GTP. A KH-like domain is found at 353 to 437 (AHIPTPKLTR…PLRVEFRTGH (85 aa)). Residues 434-468 (RTGHNPYAGKKAPPLTEEEARRAHSRRRRNRKKYG) are disordered. Residues 456 to 468 (AHSRRRRNRKKYG) show a composition bias toward basic residues.

Belongs to the TRAFAC class TrmE-Era-EngA-EngB-Septin-like GTPase superfamily. EngA (Der) GTPase family. As to quaternary structure, associates with the 50S ribosomal subunit.

In terms of biological role, GTPase that plays an essential role in the late steps of ribosome biogenesis. The protein is GTPase Der of Nitrosomonas eutropha (strain DSM 101675 / C91 / Nm57).